A 1241-amino-acid polypeptide reads, in one-letter code: ATP-dependent helicase/nuclease subunit A (1241 aa).

The UvrD-like helicase ATP-binding domain occupies 12-485; it reads SQWTDDQWKA…IDLAKNFRSR (474 aa). 33-40 is a binding site for ATP; sequence AAAGSGKT. Positions 505–805 constitute a UvrD-like helicase C-terminal domain; sequence GEIDYDADAE…RIMTIHKSKG (301 aa).

This sequence belongs to the helicase family. AddA subfamily. As to quaternary structure, heterodimer of AddA and AddB/RexB. Mg(2+) is required as a cofactor.

The catalysed reaction is Couples ATP hydrolysis with the unwinding of duplex DNA by translocating in the 3'-5' direction.. The enzyme catalyses ATP + H2O = ADP + phosphate + H(+). Functionally, the heterodimer acts as both an ATP-dependent DNA helicase and an ATP-dependent, dual-direction single-stranded exonuclease. Recognizes the chi site generating a DNA molecule suitable for the initiation of homologous recombination. The AddA nuclease domain is required for chi fragment generation; this subunit has the helicase and 3' -&gt; 5' nuclease activities. This chain is ATP-dependent helicase/nuclease subunit A, found in Bacillus cereus (strain ZK / E33L).